The following is a 665-amino-acid chain: FAD-dependent oxidoreductase domain-containing protein 2 (665 aa).

A signal peptide spans 1-17 (MGPSGLLVALALHLAVC). An N-linked (GlcNAc...) asparagine glycan is attached at asparagine 136. Residues 642–665 (RWLGDHSTAPEPLTQSLDSNKEEL) form a disordered region. The Prevents secretion from ER motif lies at 662 to 665 (KEEL).

The protein belongs to the FOXRED2 family. In terms of assembly, interacts with SEL1L. May interact with OS9 and DNAJC10. Interacts with TXNDC16. FAD is required as a cofactor. In terms of processing, N-glycosylated.

It is found in the endoplasmic reticulum lumen. Its function is as follows. Probable flavoprotein which may function in endoplasmic reticulum associated degradation (ERAD). May bind non-native proteins in the endoplasmic reticulum and target them to the ubiquitination machinery for subsequent degradation. In Mus musculus (Mouse), this protein is FAD-dependent oxidoreductase domain-containing protein 2.